A 100-amino-acid chain; its full sequence is UPF0248 protein APE_0939 (100 aa).

This sequence belongs to the UPF0248 family.

The chain is UPF0248 protein APE_0939 from Aeropyrum pernix (strain ATCC 700893 / DSM 11879 / JCM 9820 / NBRC 100138 / K1).